The following is a 400-amino-acid chain: CCA-adding enzyme (400 aa).

ATP is bound by residues glycine 8 and arginine 11. Residues glycine 8 and arginine 11 each contribute to the CTP site. Residues aspartate 21 and aspartate 23 each coordinate Mg(2+). Arginine 91, arginine 137, and arginine 140 together coordinate ATP. Positions 91, 137, and 140 each coordinate CTP. Residues 217–322 (NFQYAMTALK…IDLFNKWDVW (106 aa)) form the HD domain.

The protein belongs to the tRNA nucleotidyltransferase/poly(A) polymerase family. Bacterial CCA-adding enzyme type 2 subfamily. The cofactor is Mg(2+).

The enzyme catalyses a tRNA precursor + 2 CTP + ATP = a tRNA with a 3' CCA end + 3 diphosphate. The catalysed reaction is a tRNA with a 3' CCA end + 2 CTP + ATP = a tRNA with a 3' CCACCA end + 3 diphosphate. In terms of biological role, catalyzes the addition and repair of the essential 3'-terminal CCA sequence in tRNAs without using a nucleic acid template. Adds these three nucleotides in the order of C, C, and A to the tRNA nucleotide-73, using CTP and ATP as substrates and producing inorganic pyrophosphate. tRNA 3'-terminal CCA addition is required both for tRNA processing and repair. Also involved in tRNA surveillance by mediating tandem CCA addition to generate a CCACCA at the 3' terminus of unstable tRNAs. While stable tRNAs receive only 3'-terminal CCA, unstable tRNAs are marked with CCACCA and rapidly degraded. The sequence is that of CCA-adding enzyme from Actinobacillus succinogenes (strain ATCC 55618 / DSM 22257 / CCUG 43843 / 130Z).